The following is a 215-amino-acid chain: Extracellular small neutral protease (215 aa).

The first 30 residues, 1 to 30 (MRMTRAASALAGLGLAVAAALGSVAPASAA), serve as a signal peptide directing secretion. Threonine 152 serves as a coordination point for Ca(2+). Position 157 (histidine 157) interacts with Zn(2+). Glutamate 158 is an active-site residue. Zn(2+) contacts are provided by histidine 161 and aspartate 167. Cysteine 173 and cysteine 186 are joined by a disulfide.

Belongs to the peptidase M7 family. It depends on Zn(2+) as a cofactor.

Its subcellular location is the secreted. It carries out the reaction Hydrolyzes proteins with a preference for Tyr or Phe in the P1' position. Has no action on amino-acid p-nitroanilides.. This Streptomyces coelicolor protein is Extracellular small neutral protease (snpA).